Reading from the N-terminus, the 753-residue chain is Photosystem I P700 chlorophyll a apoprotein A1 (753 aa).

A run of 8 helical transmembrane segments spans residues 72-95 (IFSA…FHGA), 158-181 (LYCT…FHYH), 197-221 (MNHH…HVSL), 293-311 (TAHH…GHMY), 350-373 (WHAQ…HHMY), 389-415 (LSLF…IFMV), 437-459 (AIIS…LYVH), and 534-552 (FMVH…LILL). 2 residues coordinate [4Fe-4S] cluster: cysteine 576 and cysteine 585. Transmembrane regions (helical) follow at residues 592-613 (HVFL…HFSW) and 667-689 (LSAY…MFLF). Residue histidine 678 participates in chlorophyll a' binding. Methionine 686 and tyrosine 694 together coordinate chlorophyll a. Phylloquinone is bound at residue tryptophan 695. The helical transmembrane segment at 727-747 (AVGVAHYLLGGIVTTWAFFLA) threads the bilayer.

Belongs to the PsaA/PsaB family. In terms of assembly, the PsaA/B heterodimer binds the P700 chlorophyll special pair and subsequent electron acceptors. PSI consists of a core antenna complex that captures photons, and an electron transfer chain that converts photonic excitation into a charge separation. The cyanobacterial PSI reaction center is composed of one copy each of PsaA,B,C,D,E,F,I,J,K,L,M and X, and forms trimeric complexes. Requires PSI electron transfer chain: 5 chlorophyll a, 1 chlorophyll a', 2 phylloquinones and 3 4Fe-4S clusters. PSI core antenna: 90 chlorophyll a, 22 carotenoids, 3 phospholipids and 1 galactolipid. P700 is a chlorophyll a/chlorophyll a' dimer, A0 is one or more chlorophyll a, A1 is one or both phylloquinones and FX is a shared 4Fe-4S iron-sulfur center. as cofactor.

Its subcellular location is the cellular thylakoid membrane. It carries out the reaction reduced [plastocyanin] + hnu + oxidized [2Fe-2S]-[ferredoxin] = oxidized [plastocyanin] + reduced [2Fe-2S]-[ferredoxin]. Its function is as follows. PsaA and PsaB bind P700, the primary electron donor of photosystem I (PSI), as well as the electron acceptors A0, A1 and FX. PSI is a plastocyanin/cytochrome c6-ferredoxin oxidoreductase, converting photonic excitation into a charge separation, which transfers an electron from the donor P700 chlorophyll pair to the spectroscopically characterized acceptors A0, A1, FX, FA and FB in turn. Oxidized P700 is reduced on the lumenal side of the thylakoid membrane by plastocyanin or cytochrome c6. The chain is Photosystem I P700 chlorophyll a apoprotein A1 from Trichodesmium erythraeum (strain IMS101).